The primary structure comprises 271 residues: Probable ribosomal RNA small subunit methyltransferase A (271 aa).

S-adenosyl-L-methionine contacts are provided by L12, G37, E58, D83, and N100.

Belongs to the class I-like SAM-binding methyltransferase superfamily. rRNA adenine N(6)-methyltransferase family. RsmA subfamily.

Its subcellular location is the cytoplasm. Specifically dimethylates two adjacent adenosines in the loop of a conserved hairpin near the 3'-end of 16S rRNA in the 30S particle. May play a critical role in biogenesis of 30S subunits. In Methanococcus aeolicus (strain ATCC BAA-1280 / DSM 17508 / OCM 812 / Nankai-3), this protein is Probable ribosomal RNA small subunit methyltransferase A.